A 388-amino-acid polypeptide reads, in one-letter code: Na(+)/H(+) antiporter NhaA (388 aa).

11 consecutive transmembrane segments (helical) span residues 14–34 (GGII…SGFT), 59–79 (MLLW…GLEV), 95–115 (AFPV…YLAF), 125–145 (GWAI…ALLG), 154–174 (IFLM…IALF), 179–199 (LSMV…VLNL), 219–239 (VLKS…FIPL), 254–274 (VLHP…NAGV), 287–307 (ILPL…ISLF), 328–348 (IMAV…IASL), and 356–376 (ALIN…AVIG).

Belongs to the NhaA Na(+)/H(+) (TC 2.A.33) antiporter family.

The protein resides in the cell inner membrane. It catalyses the reaction Na(+)(in) + 2 H(+)(out) = Na(+)(out) + 2 H(+)(in). In terms of biological role, na(+)/H(+) antiporter that extrudes sodium in exchange for external protons. This is Na(+)/H(+) antiporter NhaA from Citrobacter koseri (strain ATCC BAA-895 / CDC 4225-83 / SGSC4696).